Reading from the N-terminus, the 201-residue chain is Probable molybdenum cofactor guanylyltransferase (201 aa).

Residues 6-8, Lys-18, Asp-65, and Asp-97 contribute to the GTP site; that span reads LAG. Position 97 (Asp-97) interacts with Mg(2+).

The protein belongs to the MobA family. Requires Mg(2+) as cofactor.

It localises to the cytoplasm. It catalyses the reaction Mo-molybdopterin + GTP + H(+) = Mo-molybdopterin guanine dinucleotide + diphosphate. Its function is as follows. Transfers a GMP moiety from GTP to Mo-molybdopterin (Mo-MPT) cofactor (Moco or molybdenum cofactor) to form Mo-molybdopterin guanine dinucleotide (Mo-MGD) cofactor. The protein is Probable molybdenum cofactor guanylyltransferase of Staphylococcus epidermidis (strain ATCC 35984 / DSM 28319 / BCRC 17069 / CCUG 31568 / BM 3577 / RP62A).